Consider the following 25-residue polypeptide: Cytochrome c oxidase subunit 1 (25 aa).

This sequence belongs to the heme-copper respiratory oxidase family. Cu(2+) is required as a cofactor. Requires heme as cofactor.

It localises to the cell inner membrane. The enzyme catalyses 4 Fe(II)-[cytochrome c] + O2 + 8 H(+)(in) = 4 Fe(III)-[cytochrome c] + 2 H2O + 4 H(+)(out). The protein operates within energy metabolism; oxidative phosphorylation. Functionally, subunit I and II form the functional core of the enzyme complex. Electrons originating in cytochrome c are transferred via heme a and Cu(A) to the binuclear center formed by heme a3 and Cu(B). This cytochrome c oxidase shows proton pump activity across the membrane in addition to the electron transfer. This chain is Cytochrome c oxidase subunit 1 (ctaD), found in Paracoccus versutus (Thiobacillus versutus).